The sequence spans 364 residues: UDP-N-acetylglucosamine--N-acetylmuramyl-(pentapeptide) pyrophosphoryl-undecaprenol N-acetylglucosamine transferase (364 aa).

UDP-N-acetyl-alpha-D-glucosamine is bound by residues 13–15, Asn125, Arg165, Ser192, and Gln293; that span reads TGG.

It belongs to the glycosyltransferase 28 family. MurG subfamily.

Its subcellular location is the cell inner membrane. It catalyses the reaction di-trans,octa-cis-undecaprenyl diphospho-N-acetyl-alpha-D-muramoyl-L-alanyl-D-glutamyl-meso-2,6-diaminopimeloyl-D-alanyl-D-alanine + UDP-N-acetyl-alpha-D-glucosamine = di-trans,octa-cis-undecaprenyl diphospho-[N-acetyl-alpha-D-glucosaminyl-(1-&gt;4)]-N-acetyl-alpha-D-muramoyl-L-alanyl-D-glutamyl-meso-2,6-diaminopimeloyl-D-alanyl-D-alanine + UDP + H(+). It functions in the pathway cell wall biogenesis; peptidoglycan biosynthesis. Functionally, cell wall formation. Catalyzes the transfer of a GlcNAc subunit on undecaprenyl-pyrophosphoryl-MurNAc-pentapeptide (lipid intermediate I) to form undecaprenyl-pyrophosphoryl-MurNAc-(pentapeptide)GlcNAc (lipid intermediate II). This Cereibacter sphaeroides (strain ATCC 17025 / ATH 2.4.3) (Rhodobacter sphaeroides) protein is UDP-N-acetylglucosamine--N-acetylmuramyl-(pentapeptide) pyrophosphoryl-undecaprenol N-acetylglucosamine transferase.